A 304-amino-acid chain; its full sequence is Coenzyme PQQ synthesis protein B (304 aa).

This sequence belongs to the PqqB family.

It functions in the pathway cofactor biosynthesis; pyrroloquinoline quinone biosynthesis. In terms of biological role, may be involved in the transport of PQQ or its precursor to the periplasm. In Ectopseudomonas mendocina (strain ymp) (Pseudomonas mendocina), this protein is Coenzyme PQQ synthesis protein B.